Consider the following 447-residue polypeptide: ATP synthase subunit beta (447 aa).

147–154 (GGAGVGKT) is a binding site for ATP.

Belongs to the ATPase alpha/beta chains family. As to quaternary structure, F-type ATPases have 2 components, CF(1) - the catalytic core - and CF(0) - the membrane proton channel. CF(1) has five subunits: alpha(3), beta(3), gamma(1), delta(1), epsilon(1). CF(0) has three main subunits: a(1), b(2) and c(9-12). The alpha and beta chains form an alternating ring which encloses part of the gamma chain. CF(1) is attached to CF(0) by a central stalk formed by the gamma and epsilon chains, while a peripheral stalk is formed by the delta and b chains.

It is found in the cell membrane. The catalysed reaction is ATP + H2O + 4 H(+)(in) = ADP + phosphate + 5 H(+)(out). Its function is as follows. Produces ATP from ADP in the presence of a proton gradient across the membrane. The catalytic sites are hosted primarily by the beta subunits. The sequence is that of ATP synthase subunit beta from Carsonella ruddii (strain PV).